A 542-amino-acid chain; its full sequence is CTP synthase (542 aa).

The interval 1–265 (MTKFVFVTGG…DEIVCHKLNL (265 aa)) is amidoligase domain. S13 serves as a coordination point for CTP. UTP is bound at residue S13. ATP contacts are provided by residues 14–19 (SLGKGI) and D71. Residues D71 and E139 each contribute to the Mg(2+) site. CTP-binding positions include 146–148 (DIE), 186–191 (KTKPTQ), and K222. Residues 186-191 (KTKPTQ) and K222 each bind UTP. The Glutamine amidotransferase type-1 domain maps to 290–542 (NVAFVGKYVD…IAAALANRKA (253 aa)). G351 is a binding site for L-glutamine. C378 (nucleophile; for glutamine hydrolysis) is an active-site residue. L-glutamine is bound by residues 379–382 (LGMQ), E402, and R468. Active-site residues include H515 and E517.

This sequence belongs to the CTP synthase family. As to quaternary structure, homotetramer.

It carries out the reaction UTP + L-glutamine + ATP + H2O = CTP + L-glutamate + ADP + phosphate + 2 H(+). The catalysed reaction is L-glutamine + H2O = L-glutamate + NH4(+). The enzyme catalyses UTP + NH4(+) + ATP = CTP + ADP + phosphate + 2 H(+). It participates in pyrimidine metabolism; CTP biosynthesis via de novo pathway; CTP from UDP: step 2/2. Its activity is regulated as follows. Allosterically activated by GTP, when glutamine is the substrate; GTP has no effect on the reaction when ammonia is the substrate. The allosteric effector GTP functions by stabilizing the protein conformation that binds the tetrahedral intermediate(s) formed during glutamine hydrolysis. Inhibited by the product CTP, via allosteric rather than competitive inhibition. Functionally, catalyzes the ATP-dependent amination of UTP to CTP with either L-glutamine or ammonia as the source of nitrogen. Regulates intracellular CTP levels through interactions with the four ribonucleotide triphosphates. The sequence is that of CTP synthase from Methylobacillus flagellatus (strain ATCC 51484 / DSM 6875 / VKM B-1610 / KT).